The primary structure comprises 390 residues: Cystathionine beta-lyase MetC (390 aa).

Lysine 200 is subject to N6-(pyridoxal phosphate)lysine.

It belongs to the trans-sulfuration enzymes family. As to quaternary structure, homotetramer. Pyridoxal 5'-phosphate serves as cofactor.

The protein localises to the cytoplasm. It carries out the reaction L,L-cystathionine + H2O = L-homocysteine + pyruvate + NH4(+). It catalyses the reaction an S-substituted L-cysteine + H2O = a thiol + pyruvate + NH4(+). Its pathway is amino-acid biosynthesis; L-methionine biosynthesis via de novo pathway; L-homocysteine from L-cystathionine: step 1/1. Catalyzes the transformation of cystathionine into homocysteine. Also exhibits cysteine desulfhydrase activity in vitro, producing sulfide from cysteine. The polypeptide is Cystathionine beta-lyase MetC (metC) (Bacillus subtilis (strain 168)).